A 671-amino-acid chain; its full sequence is Anaphase-promoting complex subunit cut9 (671 aa).

The tract at residues 1-24 is disordered; that stretch reads MVVKRTQTDSRMQSTPGNHNHPDA. 14 TPR repeats span residues 83 to 114, 117 to 142, 150 to 173, 198 to 229, 234 to 257, 268 to 296, 306 to 334, 341 to 368, 373 to 402, 407 to 435, 442 to 470, 475 to 507, 513 to 545, and 550 to 579; these read REDYLRLWRHDALMQQQYKCAAFVGEKVLDIT, PNDAFWLAQVYCCTGDYARAKCLLTK, SACRYLAAFCLVKLYDWQGALNLL, LEASMCYLRGQVYTNLSNFDRAKECYKEALMV, YEAFDQLVSNHLLTADEEWDLVLK, AAFLRSLYMLKLNKTSHEDELRRAEDYLS, DLLLCKADTLFVRSRFIDVLAITTKILEI, VYPLHLASLHESGEKNKLYLISNDLVDR, AVTWLAVGIYYLCVNKISEARRYFSKSSTM, GPAWIGFAHSFAIEGEHDQAISAYTTAAR, LPYLFLGMQHMQLGNILLANEYLQSSYAL, PLLLNELGVVAFNKSDMQTAINHFQNALLLVKK, KPWAATWANLGHAYRKLKMYDAAIDALNQGLLL, and ANVHTAIALVYLHKKIPGLAITHLHESLAI. The interval 622 to 643 is disordered; that stretch reads NLNTSDKSMSMEDQSGKVTESV.

As to quaternary structure, the APC/C is composed of at least 13 subunits: apc1, apc2, nuc2, apc4, apc5, cut9, apc8, apc10, apc11, hcn1, apc13, apc14 and apc15. Homodimer. Interacts directly with nuc2 and hcn1. In terms of processing, phosphorylated.

The protein resides in the nucleus. Component of the anaphase-promoting complex/cyclosome (APC/C), a cell cycle-regulated E3 ubiquitin-protein ligase complex that controls progression through mitosis and the G1 phase of the cell cycle. The APC/C is thought to confer substrate specificity and, in the presence of ubiquitin-conjugating E2 enzymes, it catalyzes the formation of protein-ubiquitin conjugates that are subsequently degraded by the 26S proteasome. May play a pivotal role in the control of anaphase. This chain is Anaphase-promoting complex subunit cut9 (cut9), found in Schizosaccharomyces pombe (strain 972 / ATCC 24843) (Fission yeast).